The following is a 169-amino-acid chain: MAQMVAMPVAHSLSLICNWAKSNPLSRNTLALPASNTPNKQSLSIRCARVGGVEIPANKRIEYSLQYIHGIGRTRARQILVDLQMENKITKDMAEEELIILRDEVSKYMIEGDLRRFNALAIKRLKEIQCYRGVRHIQGLPCRGQRTKNNCRTLKGKKIAIAGKKKVSK.

A chloroplast-targeting transit peptide spans 1–47; that stretch reads MAQMVAMPVAHSLSLICNWAKSNPLSRNTLALPASNTPNKQSLSIRC.

Belongs to the universal ribosomal protein uS13 family. Part of the 30S ribosomal subunit.

The protein localises to the plastid. It is found in the chloroplast. In terms of biological role, located at the top of the head of the 30S subunit, it contacts several helices of the 16S rRNA. This Arabidopsis thaliana (Mouse-ear cress) protein is Small ribosomal subunit protein uS13c (RPS13).